The chain runs to 1131 residues: Probable secreted beta-glucosidase adg3 (1131 aa).

Positions 1–23 (MPSKIEKICLLLLGFTAASNVNA) are cleaved as a signal peptide. N-linked (GlcNAc...) asparagine glycosylation is found at Asn-58, Asn-123, Asn-252, Asn-551, Asn-593, Asn-631, and Asn-689. Residues 609-819 (GTTSSTSEIV…SSPISSNSVT (211 aa)) are disordered. Residues 623-715 (SNSNTGSLNG…YSDPTTTITS (93 aa)) show a composition bias toward low complexity. Residues 716-725 (EVSSILSSPT) show a composition bias toward polar residues. A compositionally biased stretch (low complexity) spans 726 to 737 (SMQSSVSRPQSS). Positions 738–763 (GDASGFNTIFTSISQSSDGETSGYTI) are enriched in polar residues. Low complexity-rich tracts occupy residues 764–773 (SSNSSQNSAS) and 780–819 (TSSS…NSVT). 3 N-linked (GlcNAc...) asparagine glycosylation sites follow: Asn-766, Asn-806, and Asn-857. The span at 893-909 (STSNSGSTSYSIPSSSS) shows a compositional bias: low complexity. Residues 893–918 (STSNSGSTSYSIPSSSSRNEGTTSYS) are disordered. Residue Asn-920 is glycosylated (N-linked (GlcNAc...) asparagine). The span at 977–1027 (LTVKPESSLSSSTTSGLTSSSSTIPSSTRSESNSESASTSSASKRSSSSTS) shows a compositional bias: low complexity. Residues 977-1031 (LTVKPESSLSSSTTSGLTSSSSTIPSSTRSESNSESASTSSASKRSSSSTSLVQS) are disordered.

This sequence belongs to the SUN family.

It is found in the secreted. Functionally, cell surface beta-glucosidase involved in cell wall biogenesis,. This Schizosaccharomyces pombe (strain 972 / ATCC 24843) (Fission yeast) protein is Probable secreted beta-glucosidase adg3 (adg3).